The following is a 75-amino-acid chain: U6-lycotoxin-Ls1a (75 aa).

A signal peptide spans 1 to 21 (MKLLLFTALVLVVISLIEVEA). The propeptide occupies 22–25 (ENER).

This sequence belongs to the neurotoxin 19 (CSTX) family. 06 (U6-Lctx) subfamily. Contains 4 disulfide bonds. As to expression, expressed by the venom gland.

The protein resides in the secreted. In Lycosa singoriensis (Wolf spider), this protein is U6-lycotoxin-Ls1a.